Here is a 352-residue protein sequence, read N- to C-terminus: C-X-C chemokine receptor type 4 (352 aa).

An important for chemokine binding and signaling region spans residues 1–21; that stretch reads MEGISIYTSDNYTEEMGSGDY. Topologically, residues 1–38 are extracellular; it reads MEGISIYTSDNYTEEMGSGDYDSIKEPCFREENAHFNR. Y7 bears the Sulfotyrosine mark. N11 carries N-linked (GlcNAc...) asparagine glycosylation. Y12 is modified (sulfotyrosine). O-linked (Xyl...) (chondroitin sulfate) serine glycosylation is present at S18. Sulfotyrosine is present on Y21. 2 disulfide bridges follow: C28-C274 and C109-C186. Residues 39–63 form a helical membrane-spanning segment; that stretch reads IFLPTIYSIIFLTGIVGNGLVILVM. At 64–77 the chain is on the cytoplasmic side; the sequence is GYQKKLRSMTDKYR. Residues 78 to 99 form a helical membrane-spanning segment; sequence LHLSVADLLFVITLPFWAVDAV. The chemokine binding stretch occupies residues 94–97; it reads WAVD. Residues 100 to 110 are Extracellular-facing; sequence ANWYFGNFLCK. Residues 111–130 form a helical membrane-spanning segment; that stretch reads AVHVIYTVNLYSSVLILAFI. A chemokine binding region spans residues 113-117; that stretch reads HVIYT. Topologically, residues 131–154 are cytoplasmic; that stretch reads SLDRYLAIVHATNSQKPRKLLAEK. Residues 133–135 carry the Important for signaling motif; it reads DRY. The segment at 135–147 is involved in dimerization; when bound to chemokine; the sequence is YLAIVHATNSQKP. The helical transmembrane segment at 155-174 threads the bilayer; it reads VVYVGVWIPALLLTIPDFIF. Residues 175–195 lie on the Extracellular side of the membrane; that stretch reads ASVSEADDRYICDRFYPNDLW. Residues 186–190 are chemokine binding, important for signaling; sequence CDRFY. Residues 191–210 are involved in dimerization; the sequence is PNDLWVVVFQFQHIMVGLIL. Residues 196–216 form a helical membrane-spanning segment; the sequence is VVVFQFQHIMVGLILPGIVIL. The Cytoplasmic segment spans residues 217 to 241; the sequence is SCYCIIISKLSHSKGHQKGKALKTT. Residues 242 to 261 traverse the membrane as a helical segment; the sequence is VILILAFFACWLPYYIGISI. The Extracellular segment spans residues 262–282; sequence DSFILLEIIKQGCEFENTVHK. An involved in dimerization region spans residues 266–268; it reads LLE. Residues 283 to 302 form a helical membrane-spanning segment; sequence WISITEALAFFHCCLNPILY. Topologically, residues 303–352 are cytoplasmic; the sequence is AFLGAKFKTSAQHALTSVSRGSSLKILSKGKRGGHSSVSTESESSSFHSS. A phosphoserine mark is found at S319 and S321. Phosphoserine; by PKC and GRK6 occurs at positions 324 and 325. The segment at 329 to 352 is disordered; it reads LSKGKRGGHSSVSTESESSSFHSS. Position 330 is a phosphoserine; by GRK6 (S330). K331 is covalently cross-linked (Glycyl lysine isopeptide (Lys-Gly) (interchain with G-Cter in ubiquitin)). The segment covering 337 to 352 has biased composition (low complexity); it reads HSSVSTESESSSFHSS. The residue at position 339 (S339) is a Phosphoserine; by GRK6. S348 and S351 each carry phosphoserine.

It belongs to the G-protein coupled receptor 1 family. In terms of assembly, monomer. Can form homodimers. Interacts with CD164. Interacts with ARRB2; the interaction is dependent on the C-terminal phosphorylation of CXCR4 and allows activation of MAPK1 and MAPK3. Interacts with ARR3; the interaction is dependent on the C-terminal phosphorylation of CXCR4 and modulates calcium mobilization. Interacts with RNF113A; the interaction, enhanced by CXCL12, promotes CXCR4 ubiquitination and subsequent degradation. Interacts (via the cytoplasmic C-terminal) with ITCH (via the WW domains I and II); the interaction, enhanced by CXCL12, promotes CXCR4 ubiquitination and leads to its degradation. Interacts with extracellular ubiquitin. Interacts with DBN1; this interaction is enhanced by antigenic stimulation. Following LPS binding, may form a complex with GDF5, HSP90AA1 and HSPA8. Phosphorylated on agonist stimulation. Rapidly phosphorylated on serine and threonine residues in the C-terminal. Phosphorylation at Ser-324 and Ser-325 leads to recruitment of ITCH, ubiquitination and protein degradation. Post-translationally, ubiquitinated after ligand binding, leading to its degradation. Ubiquitinated by ITCH at the cell membrane on agonist stimulation. The ubiquitin-dependent mechanism, endosomal sorting complex required for transport (ESCRT), then targets CXCR4 for lysosomal degradation. This process is dependent also on prior Ser-/Thr-phosphorylation in the C-terminal of CXCR4. Also binding of ARRB1 to STAM negatively regulates CXCR4 sorting to lysosomes though modulating ubiquitination of SFR5S. In terms of processing, sulfation is required for efficient binding of CXCL12/SDF-1alpha and promotes its dimerization. O- and N-glycosylated. N-glycosylation can mask coreceptor function. The O-glycosylation chondroitin sulfate attachment does not affect interaction with CXCL12/SDF-1alpha nor its coreceptor activity.

The protein resides in the cell membrane. The protein localises to the cell junction. It is found in the early endosome. It localises to the late endosome. Its subcellular location is the lysosome. Functionally, receptor for the C-X-C chemokine CXCL12/SDF-1 that transduces a signal by increasing intracellular calcium ion levels and enhancing MAPK1/MAPK3 activation. Involved in the AKT signaling cascade. Plays a role in regulation of cell migration, e.g. during wound healing. Acts as a receptor for extracellular ubiquitin; leading to enhanced intracellular calcium ions and reduced cellular cAMP levels. Binds bacterial lipopolysaccharide (LPS) et mediates LPS-induced inflammatory response, including TNF secretion by monocytes. Involved in hematopoiesis and in cardiac ventricular septum formation. Also plays an essential role in vascularization of the gastrointestinal tract, probably by regulating vascular branching and/or remodeling processes in endothelial cells. Involved in cerebellar development. In the CNS, could mediate hippocampal-neuron survival. This Chlorocebus aethiops (Green monkey) protein is C-X-C chemokine receptor type 4 (CXCR4).